A 385-amino-acid polypeptide reads, in one-letter code: DNA replication and repair protein RecF (385 aa).

Residue 30-37 coordinates ATP; it reads GSNGFGKT.

It belongs to the RecF family.

Its subcellular location is the cytoplasm. Its function is as follows. The RecF protein is involved in DNA metabolism; it is required for DNA replication and normal SOS inducibility. RecF binds preferentially to single-stranded, linear DNA. It also seems to bind ATP. This chain is DNA replication and repair protein RecF, found in Mycobacterium avium (strain 104).